A 1095-amino-acid polypeptide reads, in one-letter code: Putative patatin-like phospholipase domain-containing protein M110.7 (1095 aa).

The chain crosses the membrane as a helical span at residues 9–29 (LLLIFENILELCMCITLVILI). The segment at 75 to 113 (HKKRSSKEEMTPDKKRDSSEKISKQPPRELFEPNEQEQV) is disordered. Residues 80–105 (SKEEMTPDKKRDSSEKISKQPPRELF) show a composition bias toward basic and acidic residues. Residues 144 to 237 (VETL…LTSF), 327 to 416 (RKYE…IQFL), and 450 to 509 (IETG…TVMA) contribute to the a nucleoside 3',5'-cyclic phosphate site. The PNPLA domain maps to 768–935 (IVFGGGGARG…VNNLPADIMR (168 aa)). A GXGXXG motif is present at residues 772–777 (GGGARG). The GXSXG signature appears at 799 to 803 (GTSIG). Residue Ser-801 is the Nucleophile of the active site. Asp-922 acts as the Proton acceptor in catalysis. The short motif at 922–924 (DGA) is the DGA/G element.

This sequence belongs to the NTE family.

It localises to the membrane. The protein is Putative patatin-like phospholipase domain-containing protein M110.7 of Caenorhabditis elegans.